The sequence spans 323 residues: tRNA U34 carboxymethyltransferase (323 aa).

Residues lysine 91, tryptophan 105, lysine 110, glycine 130, 181–182 (IE), methionine 196, tyrosine 200, and arginine 315 each bind carboxy-S-adenosyl-L-methionine.

This sequence belongs to the class I-like SAM-binding methyltransferase superfamily. CmoB family. As to quaternary structure, homotetramer.

The catalysed reaction is carboxy-S-adenosyl-L-methionine + 5-hydroxyuridine(34) in tRNA = 5-carboxymethoxyuridine(34) in tRNA + S-adenosyl-L-homocysteine + H(+). Catalyzes carboxymethyl transfer from carboxy-S-adenosyl-L-methionine (Cx-SAM) to 5-hydroxyuridine (ho5U) to form 5-carboxymethoxyuridine (cmo5U) at position 34 in tRNAs. This Yersinia pseudotuberculosis serotype O:3 (strain YPIII) protein is tRNA U34 carboxymethyltransferase.